A 69-amino-acid polypeptide reads, in one-letter code: Alpha-elapitoxin-Lc2c (69 aa).

Disulfide bonds link Cys-3-Cys-20, Cys-13-Cys-41, Cys-45-Cys-56, and Cys-57-Cys-62.

The protein belongs to the three-finger toxin family. Long-chain subfamily. Type II alpha-neurotoxin sub-subfamily. Expressed by the venom gland.

It is found in the secreted. Functionally, binds with high affinity to muscular nicotinic acetylcholine receptors (nAChRs), whereas it binds with a low affinity to neuronal alpha-7/CHRNA7 nAChRs. The sequence is that of Alpha-elapitoxin-Lc2c from Laticauda colubrina (Yellow-lipped sea krait).